A 178-amino-acid chain; its full sequence is Mediator of RNA polymerase II transcription subunit 28 (178 aa).

The disordered stretch occupies residues 1 to 25 (MAAPLGGMFSGQQPGPPQPPPGLLG). Residues 109–145 (QVIKEDVSELRNELQRKDALVQKHLTKLRHWQQVLED) adopt a coiled-coil conformation.

It belongs to the Mediator complex subunit 28 family. In terms of assembly, component of the Mediator complex, which is composed of MED1, MED4, MED6, MED7, MED8, MED9, MED10, MED11, MED12, MED13, MED13L, MED14, MED15, MED16, MED17, MED18, MED19, MED20, MED21, MED22, MED23, MED24, MED25, MED26, MED27, MED29, MED30, MED31, CCNC, CDK8 and CDC2L6/CDK11. The MED12, MED13, CCNC and CDK8 subunits form a distinct module termed the CDK8 module. Mediator containing the CDK8 module is less active than Mediator lacking this module in supporting transcriptional activation. Individual preparations of the Mediator complex lacking one or more distinct subunits have been variously termed ARC, CRSP, DRIP, PC2, SMCC and TRAP. Forms a ternary complex with NF2/merlin and GRB2. Binds to actin.

Its subcellular location is the nucleus. The protein resides in the cytoplasm. The protein localises to the membrane. In terms of biological role, component of the Mediator complex, a coactivator involved in the regulated transcription of nearly all RNA polymerase II-dependent genes. Mediator functions as a bridge to convey information from gene-specific regulatory proteins to the basal RNA polymerase II transcription machinery. Mediator is recruited to promoters by direct interactions with regulatory proteins and serves as a scaffold for the assembly of a functional preinitiation complex with RNA polymerase II and the general transcription factors. May be part of a complex containing NF2/merlin that participates in cellular signaling to the actin cytoskeleton downstream of tyrosine kinase signaling pathways. The sequence is that of Mediator of RNA polymerase II transcription subunit 28 (MED28) from Bos taurus (Bovine).